Reading from the N-terminus, the 198-residue chain is Carnitine operon protein CaiE (198 aa).

Residues Val179 to Gln198 are disordered. A compositionally biased stretch (basic and acidic residues) spans Glu180–Gln198.

Belongs to the transferase hexapeptide repeat family.

It functions in the pathway amine and polyamine metabolism; carnitine metabolism. Overproduction of CaiE stimulates the activity of CaiB and CaiD. This Salmonella enteritidis PT4 (strain P125109) protein is Carnitine operon protein CaiE.